Here is a 416-residue protein sequence, read N- to C-terminus: 46 kDa surface antigen (416 aa).

Residues 1-27 (MLRKKFLYSSAIYATSLASIIAFVAAG) form the signal peptide. C28 carries the N-palmitoyl cysteine lipid modification. Residue C28 is the site of S-diacylglycerol cysteine attachment.

It localises to the cell membrane. In Mesomycoplasma hyopneumoniae (strain 232) (Mycoplasma hyopneumoniae), this protein is 46 kDa surface antigen (p46).